The chain runs to 450 residues: MKYFGTDGVRGIANETLSPELAFKLGRCGGYVLTQHASNKPARVLVARDTRISGQMLEQALIAGLLSVGIEVFSLGVMTTPGVAYLVRLQDADAGIMISASHNPVQDNGIKFFGSDGYKLSDEKEEEIEALLESDEDTLPRPSAEGLGTLSDYREGALKYTQFLEQTIPDDLEGMHIAVDGANGSTSALVSRLFADLGADFDTMATNPDGLNINKGVGSTHPEALAKFVVEKGAQVGVAFDGDGDRCIAVDENGEIVDGDKIMFICGKYLSERGRLKKDTIVTTVMSNIGLYKAMKENNLNSVQTKVGDRYVVEAMRKDGYNVGGEQSGHVVFLDFNTTGDGMLTALQLLNVIKQTGKKLSELAAEVKTYPQELVNIKVTDKKAALDNEKIKEAIAKVEEKMAGDGRVLVRPSGTEDLLRVMAEAKTQELVHDYVMEIADVVEAEMGVNE.

S101 acts as the Phosphoserine intermediate in catalysis. Residues S101, D241, D243, and D245 each contribute to the Mg(2+) site. The residue at position 101 (S101) is a Phosphoserine.

It belongs to the phosphohexose mutase family. Requires Mg(2+) as cofactor. In terms of processing, activated by phosphorylation.

The enzyme catalyses alpha-D-glucosamine 1-phosphate = D-glucosamine 6-phosphate. In terms of biological role, catalyzes the conversion of glucosamine-6-phosphate to glucosamine-1-phosphate. The protein is Phosphoglucosamine mutase of Ligilactobacillus salivarius (strain UCC118) (Lactobacillus salivarius).